Here is a 56-residue protein sequence, read N- to C-terminus: Small ribosomal subunit protein uS14 (56 aa).

Zn(2+)-binding residues include Cys-21, Cys-24, Cys-39, and Cys-42.

This sequence belongs to the universal ribosomal protein uS14 family. As to quaternary structure, component of the 40S small ribosomal subunit. The cofactor is Zn(2+).

The protein resides in the cytoplasm. It localises to the cytosol. Its subcellular location is the rough endoplasmic reticulum. The chain is Small ribosomal subunit protein uS14 (RpS29) from Drosophila melanogaster (Fruit fly).